The following is a 351-amino-acid chain: MQLSDFSFELPDELIARYPLETRSASRLLHLDAKGQYHDHMFTDIIDLFEEGDLLVLNDTKVMKARLKGKRTTGGAIEILVERMPNHTTAYCHIKASNSPKAGAELFVGADNIPVIVRGRHENLFVVEFSQPILPVLEQYGQLPIPPYFNREAEEIDTERYQTVFHNPEKIASVAAPTASLHFDEELLAKLDQKGVKKTFVTLHVGAGTFMPVRTDDITNHVMHSEWCDVPQETIDLILATKARGNKVIAVGTTATRALESAAQAHGGKIAAWTGDTQIFIYPGYEFCIVDRLITNFHLPESTLLMLVSALSNRENILAAYEHAVKDRYHFFSYGDAMLIDKLEVLKLKLG.

Belongs to the QueA family. In terms of assembly, monomer.

It localises to the cytoplasm. The catalysed reaction is 7-aminomethyl-7-carbaguanosine(34) in tRNA + S-adenosyl-L-methionine = epoxyqueuosine(34) in tRNA + adenine + L-methionine + 2 H(+). Its pathway is tRNA modification; tRNA-queuosine biosynthesis. Functionally, transfers and isomerizes the ribose moiety from AdoMet to the 7-aminomethyl group of 7-deazaguanine (preQ1-tRNA) to give epoxyqueuosine (oQ-tRNA). This chain is S-adenosylmethionine:tRNA ribosyltransferase-isomerase, found in Acinetobacter baumannii (strain SDF).